Reading from the N-terminus, the 509-residue chain is Bifunctional purine biosynthesis protein PurH (509 aa).

Residues 1–144 (MKRALLSVSD…KNARDVIVVV (144 aa)) form the MGS-like domain.

The protein belongs to the PurH family.

It carries out the reaction (6R)-10-formyltetrahydrofolate + 5-amino-1-(5-phospho-beta-D-ribosyl)imidazole-4-carboxamide = 5-formamido-1-(5-phospho-D-ribosyl)imidazole-4-carboxamide + (6S)-5,6,7,8-tetrahydrofolate. It catalyses the reaction IMP + H2O = 5-formamido-1-(5-phospho-D-ribosyl)imidazole-4-carboxamide. The protein operates within purine metabolism; IMP biosynthesis via de novo pathway; 5-formamido-1-(5-phospho-D-ribosyl)imidazole-4-carboxamide from 5-amino-1-(5-phospho-D-ribosyl)imidazole-4-carboxamide (10-formyl THF route): step 1/1. Its pathway is purine metabolism; IMP biosynthesis via de novo pathway; IMP from 5-formamido-1-(5-phospho-D-ribosyl)imidazole-4-carboxamide: step 1/1. In Oenococcus oeni (strain ATCC BAA-331 / PSU-1), this protein is Bifunctional purine biosynthesis protein PurH.